The following is a 125-amino-acid chain: Fluoride-specific ion channel FluC (125 aa).

Helical transmembrane passes span 5–25 (LLVA…GALV), 29–49 (LGAG…FLIG), 66–86 (LFLA…SYET), and 95–115 (VGKA…LAFL). Glycine 74 and threonine 77 together coordinate Na(+).

The protein belongs to the fluoride channel Fluc/FEX (TC 1.A.43) family.

It is found in the cell inner membrane. The enzyme catalyses fluoride(in) = fluoride(out). Its activity is regulated as follows. Na(+) is not transported, but it plays an essential structural role and its presence is essential for fluoride channel function. In terms of biological role, fluoride-specific ion channel. Important for reducing fluoride concentration in the cell, thus reducing its toxicity. The protein is Fluoride-specific ion channel FluC of Thermus thermophilus (strain ATCC 27634 / DSM 579 / HB8).